Reading from the N-terminus, the 174-residue chain is Protein SHI RELATED SEQUENCE 3 (174 aa).

Residues C9, C12, C20, C25, C29, and C36 each contribute to the Zn(2+) site. Positions 9 to 36 (CEDCGNQAKKDCVYMRCRTCCKSKAFHC) form a DNA-binding region, zn(2)-C6 fungal-type; degenerate. The Required for homo- and heterodimerization motif lies at 110–113 (IGGH).

It belongs to the SHI protein family.

It localises to the nucleus. Transcription activator that binds DNA on 5'-ACTCTAC-3' and promotes auxin homeostasis-regulating gene expression (e.g. YUC genes), as well as genes affecting stamen development, cell expansion and timing of flowering. Synergistically with other SHI-related proteins, regulates gynoecium, stamen and leaf development in a dose-dependent manner, controlling apical-basal patterning. Promotes style and stigma formation, and influences vascular development during gynoecium development. May also have a role in the formation and/or maintenance of the shoot apical meristem (SAM). In Arabidopsis thaliana (Mouse-ear cress), this protein is Protein SHI RELATED SEQUENCE 3 (SRS3).